Here is a 205-residue protein sequence, read N- to C-terminus: Potassium-transporting ATPase KdpC subunit (205 aa).

A helical transmembrane segment spans residues Val-9 to Ile-29.

The protein belongs to the KdpC family. The system is composed of three essential subunits: KdpA, KdpB and KdpC.

The protein resides in the cell membrane. Part of the high-affinity ATP-driven potassium transport (or Kdp) system, which catalyzes the hydrolysis of ATP coupled with the electrogenic transport of potassium into the cytoplasm. This subunit acts as a catalytic chaperone that increases the ATP-binding affinity of the ATP-hydrolyzing subunit KdpB by the formation of a transient KdpB/KdpC/ATP ternary complex. This is Potassium-transporting ATPase KdpC subunit from Thermoplasma acidophilum (strain ATCC 25905 / DSM 1728 / JCM 9062 / NBRC 15155 / AMRC-C165).